A 171-amino-acid polypeptide reads, in one-letter code: Shikimate kinase (171 aa).

ATP is bound at residue 14–19 (GAGKST). Mg(2+) is bound at residue Ser18. The substrate site is built by Asp36, Arg60, and Gly82. Arg120 contributes to the ATP binding site. Position 139 (Arg139) interacts with substrate. Gln156 serves as a coordination point for ATP.

It belongs to the shikimate kinase family. Monomer. Mg(2+) serves as cofactor.

The protein resides in the cytoplasm. It catalyses the reaction shikimate + ATP = 3-phosphoshikimate + ADP + H(+). The protein operates within metabolic intermediate biosynthesis; chorismate biosynthesis; chorismate from D-erythrose 4-phosphate and phosphoenolpyruvate: step 5/7. Its function is as follows. Catalyzes the specific phosphorylation of the 3-hydroxyl group of shikimic acid using ATP as a cosubstrate. This Shewanella denitrificans (strain OS217 / ATCC BAA-1090 / DSM 15013) protein is Shikimate kinase.